The following is a 261-amino-acid chain: tRNA 5-carboxymethoxyuridine methyltransferase (261 aa).

Residues Arg-26, 52-53 (GG), Asp-73, 102-103 (AQ), and His-119 contribute to the S-adenosyl-L-methionine site.

This sequence belongs to the class I-like SAM-binding methyltransferase superfamily. CmoM family. Homodimer.

It carries out the reaction 5-carboxymethoxyuridine(34) in tRNA + S-adenosyl-L-methionine = 5-methoxycarbonylmethoxyuridine(34) in tRNA + S-adenosyl-L-homocysteine. Its function is as follows. Catalyzes the methylation of 5-carboxymethoxyuridine (cmo5U) to form 5-methoxycarbonylmethoxyuridine (mcmo5U) at position 34 in tRNAs. The sequence is that of tRNA 5-carboxymethoxyuridine methyltransferase from Escherichia coli O157:H7.